The following is a 201-amino-acid chain: Molybdenum cofactor guanylyltransferase (201 aa).

GTP-binding positions include 15–17 (LCG), lysine 28, aspartate 74, and aspartate 104. Aspartate 104 lines the Mg(2+) pocket.

The protein belongs to the MobA family. In terms of assembly, monomer. Mg(2+) serves as cofactor.

The protein resides in the cytoplasm. It catalyses the reaction Mo-molybdopterin + GTP + H(+) = Mo-molybdopterin guanine dinucleotide + diphosphate. Transfers a GMP moiety from GTP to Mo-molybdopterin (Mo-MPT) cofactor (Moco or molybdenum cofactor) to form Mo-molybdopterin guanine dinucleotide (Mo-MGD) cofactor. This is Molybdenum cofactor guanylyltransferase from Ectopseudomonas mendocina (strain ymp) (Pseudomonas mendocina).